We begin with the raw amino-acid sequence, 214 residues long: UBX domain-containing protein 10 (214 aa).

The segment covering 1–13 (MHVTRPKSSKGRS) has biased composition (basic residues). The segment at 1-79 (MHVTRPKSSK…AYDRPPEEPV (79 aa)) is disordered. The segment covering 16 to 25 (MITNSSMIYT) has biased composition (polar residues). The segment covering 49 to 60 (SLRSRAILRRSS) has biased composition (low complexity). In terms of domain architecture, UBX spans 127 to 204 (PEESDLLLAI…GVLNKSVLCI (78 aa)).

The protein belongs to the UBXN10 family.

The protein resides in the cell projection. The protein localises to the cilium. Its function is as follows. Required for ciliogenesis. Acts as a tethering factor that facilitates recruitment of vcp/p97 to the intraflagellar transport complex B (IFT-B) in cilia. The polypeptide is UBX domain-containing protein 10 (Danio rerio (Zebrafish)).